Consider the following 101-residue polypeptide: ATP-dependent Clp protease adapter protein ClpS (101 aa).

It belongs to the ClpS family. Binds to the N-terminal domain of the chaperone ClpA.

Functionally, involved in the modulation of the specificity of the ClpAP-mediated ATP-dependent protein degradation. In Treponema denticola (strain ATCC 35405 / DSM 14222 / CIP 103919 / JCM 8153 / KCTC 15104), this protein is ATP-dependent Clp protease adapter protein ClpS.